Consider the following 2939-residue polypeptide: MAPATETVDFKKLIVTLNGKTITGRTSALKSLISYFKGDETGSQAESHSQKLFDDKTYHYVYEALFTCALTEKADYFSCLKSSKSDSVRNSCVKRLEGCAEALRLAVQHGAYKIKRKTATAIADHITQTLLDSDDNFFEPLLKGYVKVLSAFLNIQVNVENLAAFGGEKWESSIDLCLNAISRFLEAAEHDSGTSVRASPAPGTPATSRAGSVGPLSASVQVNGQLAIEFLACVKALTSASNAPVLRRAKRISQLVLRLLTLRHIKLGELQRDSFSILNNILVRVQTESIALTNTITTALVPVLSHCWQPRSLSRDAMSTSLKDEMLKTLYGIHLYLESLLREATDDKLLQDTEDLLDSLWSEYSRRDDKTRLQLGDVTFSAMQLHPDHPLTMVFGLRPYHLAGEQNWALLENIALLEIVYAKNSQRDRQHLEDEPDKPRKRRRVIGSSNRIHQKLMSQDPAVQLTALQLIPFLSALKHPSLEEVKGALVDLSQFISAKQGLVASWAMIACSSLAAHKTSRDPSLSAMWKQAWHIGIRSLSLPSTSRSACVLLNWILKAKLLSDHEIAGDVNQIITTADISGPAMLVDSAPVLMLTLLRIRNAIFPNASQSTSSHVIRWVFLKWNPCESAYASVHGVHAAPVDLINLLRACYEMPPLRMNTSLTVFDGPVAQFRAVQKQRHAMLRYLLLLEDEAPPEDSHKATSTDQPKREEIRAADSSSSHSAKRLILELLFPKLDELLQMVELWHKRGESDSAAPVSTDRLVSVASTCIVGAFIMPELVGLNSSMSRDLEKTVFGIVEGMIKAIAESPQSEDFFNLVLEVSAPYIPTLGEAELTHFKREEPYALRLFATVSNSLLEKTRRESPTDSDPASMDLDDEFDSQETRKSTTAGKRFLSRRDITLKHTPEAFYLDTSLRLHLLRIIRADDGELGRVPDPIVDHLLELSDEDLLSCRLFMQELFASDVVTPVDLAIRMIERIAATISNNQYTCCEAAMCTVMDIMEGFITMWTDEELEISNLVGDIYDHLIKRALPNNSLSSTAQIWFSRLLFRLLEVNPMFASQVLKLPSTRSTLLTILRDAPMDVKFFIGINLPRIFGMHVLQTHDDIIVEILEVLPGEGMEGIAFRLFVLAELACKWPTLLRRCAYHIFETPGKNQTSASHATSCLKRVSRCLNLSSPQELFTIFAPQILYTWLAIDSIDEIPYSIFGFSNLAELLSKSQSEAVGIMIMRGHETDARELAKTLKLSIQELVTQNFSKIVAYSIAQDSSLPNEVTGESRVRRIIGAEPYSSNIILNFADILAIFFEICDQEYPIEDSFRKDAANFAYAADIMDKIKAFGHLDTMLPPNQQPSYKAKFLKRQILHLVKRTNYELHDIWTPALVVFVARKLLNTIHPALGPLHACSVLRKIRVLICLAGDTALYGYPLEMLLHSLRAFVVDPECADDALGITQYLITEGSDHLIRFPSFLAGYALSCLADLRVFLESSQSSTTQESQFKATKSKAQLFHAWFSKYLANYTTNAWKDKTQKEAFEAITQSAANIRVMGNAEKGTHESKLLLEILKDWGRQHQLLNGPARSVALSILCGSFNVPPPSRLDVIQSDEEALAHGAAVWMSCGSKKLSSEYLAWAGRVIGRSYAASGDVPPELLRESRLQEYRKKSPVNFDFMESEEALLSLIEALTASSDGFRAGLAEAALRVAVSDALHENDRPLITACQKSLSESLLVASEWGELRIPRSDRFSVEHPNETEIFSAEFLESPEWAQQLTTLLAQSVPGSVALRVLPPILTKVKGFAEQAFPFIVHNVLEYELDQTQGMKQKLSEALKEWLTSTSPAARDNQKLLINTILYLRTQANPNETSIADRLHWLEVNFSIAAAAATRCGMYKVALLFAELASTEITRQSRRSSAIQGLGDTSEILLDIFENIDDPDAYYGLTQDASLSTVLARLEYENDGTKSLAFRGAQYDSHLRRRDVASQQDGQALIKALSSLGLAGLSNSLLQTQQSLDGSSTSLDSTFITARRLEIWNLPAPAATENWAVTVYKAYQSMHQASDINMVRSAVHDGLTKTLKHLTGKSLNTLTLRHQLGALATLAELDDVLNTGDLSELNGIIEDFQARSKWMMSGQYDDVSRILSCRETTLSLWSQRHNLRPARLTPANARLAQIRGMLVSSDIYRFHRATQETLNLSTTLTDLIRPSEQMGLAVDAAIRMETANSLWDQGEMISSIRMLQNIDKESPLEKQTVPVSRSDLLSKIGYQVSVARLESPDTIQKNYLEPALKELKGKSEGKEAGRVYHQFAMFCDEQLQNPDGLEDLARLQNLERGKNDEVTQLKALIASTRDSQLKNKYSSHLSKAKQWLDLDQQELRRVEQTRSEFVRLSLQNYLLSLAASDEYNNDALRFTALWLECSEDDMVNEVVKRYLSKVPTRKFAPLINQLSSRLQHQEGLFQITLIGLVYSICLDHPYHGMYQIWSGVKARSIKNDEVALSRQKATDKIARAIKKSGASAAKIYLAINATSKVYHNLAMDRDAKKYKAGHKMNIKDSKAGLEFLAAFAEFPIPPPTMQMPLLASCDYSQVPMIVKFEPQMSIASGVSAPKIITAIGSDGRQYKQLVKGGNDDLRQDAIMEQVFAAVSELLKHHRATRQRNLGIRTYKVLPLTETTGVIEFVSNTIPLHEYLMPAHEIYYPKDLKGSHCRKEIMNAQSKSVDTRVAVYRKVTERFHPVMRYFFMEWFPDPDEWFARRTAYTRTTAAISMLGHVLGLGDRHGHNILLDTKTGEVVHIDLGVAFELGRILPVPELVPFRLTRDIVDGMGITKTEGVFRRCCEFTLDALREETYSIMTILDVLRYDPLYSWSMSPLRMARLQNVRVGAGEDDVVEAEDERRAGDKKSTKNLNEPSEADRALEVVRKKLSKTLSVMATVNDLINQATDERNLAVLFCGWAAYA.

Disordered regions lie at residues Gly-193–Ser-212, Pro-695–Ser-718, and Lys-859–Lys-886. A compositionally biased stretch (basic and acidic residues) spans Glu-697–Ala-715. An FAT domain is found at Ile-1869–Ala-2471. Residues Phe-2577–Glu-2890 form the PI3K/PI4K catalytic domain. Residues Ile-2583–Ala-2589 form a G-loop region. Positions Gly-2755–Asn-2763 are catalytic loop. The tract at residues His-2775 to Thr-2799 is activation loop. The interval Asp-2869 to Ala-2894 is disordered. Residues Asp-2875–Ser-2884 are compositionally biased toward basic and acidic residues. An FATC domain is found at Lys-2907 to Ala-2939.

Belongs to the PI3/PI4-kinase family. ATM subfamily. In terms of assembly, associates with DNA double-strand breaks.

It is found in the nucleus. The protein localises to the chromosome. Its subcellular location is the telomere. The catalysed reaction is L-seryl-[protein] + ATP = O-phospho-L-seryl-[protein] + ADP + H(+). The enzyme catalyses L-threonyl-[protein] + ATP = O-phospho-L-threonyl-[protein] + ADP + H(+). Serine/threonine protein kinase which activates checkpoint signaling upon genotoxic stresses such as ionizing radiation (IR), ultraviolet light (UV), or DNA replication stalling, thereby acting as a DNA damage sensor. Recognizes the substrate consensus sequence [ST]-Q. Phosphorylates histone H2A to form H2AS128ph (gamma-H2A) at sites of DNA damage, involved in the regulation of DNA damage response mechanism. Required for the control of telomere length and genome stability. This Neurospora crassa (strain ATCC 24698 / 74-OR23-1A / CBS 708.71 / DSM 1257 / FGSC 987) protein is Serine/threonine-protein kinase tel1 (mus-21).